The following is an 87-amino-acid chain: Probable Fe(2+)-trafficking protein (87 aa).

It belongs to the Fe(2+)-trafficking protein family. In terms of assembly, monomer.

Its function is as follows. Could be a mediator in iron transactions between iron acquisition and iron-requiring processes, such as synthesis and/or repair of Fe-S clusters in biosynthetic enzymes. The sequence is that of Probable Fe(2+)-trafficking protein from Buchnera aphidicola subsp. Baizongia pistaciae (strain Bp).